The following is a 381-amino-acid chain: tRNA-specific 2-thiouridylase MnmA (381 aa).

ATP contacts are provided by residues A14–S21 and M40. The Nucleophile role is filled by C108. C108 and C205 are joined by a disulfide. G132 provides a ligand contact to ATP. Residues K155–Q157 are interaction with tRNA. C205 functions as the Cysteine persulfide intermediate in the catalytic mechanism. The interval R309–Y310 is interaction with tRNA.

Belongs to the MnmA/TRMU family.

The protein resides in the cytoplasm. It carries out the reaction S-sulfanyl-L-cysteinyl-[protein] + uridine(34) in tRNA + AH2 + ATP = 2-thiouridine(34) in tRNA + L-cysteinyl-[protein] + A + AMP + diphosphate + H(+). Its function is as follows. Catalyzes the 2-thiolation of uridine at the wobble position (U34) of tRNA, leading to the formation of s(2)U34. This Deinococcus geothermalis (strain DSM 11300 / CIP 105573 / AG-3a) protein is tRNA-specific 2-thiouridylase MnmA.